The sequence spans 518 residues: Glucose-6-phosphate 1-dehydrogenase (518 aa).

Residues glycine 36–lysine 43, arginine 70, and lysine 169 each bind NADP(+). D-glucose 6-phosphate-binding positions include lysine 169, histidine 199 to lysine 203, glutamate 237, and aspartate 256. Histidine 261 serves as the catalytic Proton acceptor. Residue arginine 356 coordinates NADP(+). Residues lysine 359 and arginine 364 each contribute to the D-glucose 6-phosphate site. NADP(+)-binding residues include lysine 365, arginine 369, and arginine 392. Glutamine 394 is a D-glucose 6-phosphate binding site. NADP(+) contacts are provided by residues tyrosine 400–lysine 402, aspartate 420–threonine 422, arginine 486, tyrosine 502, and tryptophan 508.

The protein belongs to the glucose-6-phosphate dehydrogenase family.

The protein localises to the cytoplasm. It localises to the cytosol. It catalyses the reaction D-glucose 6-phosphate + NADP(+) = 6-phospho-D-glucono-1,5-lactone + NADPH + H(+). It functions in the pathway carbohydrate degradation; pentose phosphate pathway; D-ribulose 5-phosphate from D-glucose 6-phosphate (oxidative stage): step 1/3. Functionally, cytosolic glucose-6-phosphate dehydrogenase that catalyzes the first and rate-limiting step of the oxidative branch within the pentose phosphate pathway/shunt, an alternative route to glycolysis for the dissimilation of carbohydrates and a major source of reducing power and metabolic intermediates for fatty acid and nucleic acid biosynthetic processes. This chain is Glucose-6-phosphate 1-dehydrogenase (Zw), found in Drosophila yakuba (Fruit fly).